A 376-amino-acid polypeptide reads, in one-letter code: Erythronate-4-phosphate dehydrogenase (376 aa).

The substrate site is built by S45 and T67. Position 147 (D147) interacts with NAD(+). R209 is an active-site residue. An NAD(+)-binding site is contributed by D233. The active site involves E238. The active-site Proton donor is the H255. G258 contacts NAD(+). Position 259 (Y259) interacts with substrate.

It belongs to the D-isomer specific 2-hydroxyacid dehydrogenase family. PdxB subfamily. Homodimer.

The protein resides in the cytoplasm. The enzyme catalyses 4-phospho-D-erythronate + NAD(+) = (R)-3-hydroxy-2-oxo-4-phosphooxybutanoate + NADH + H(+). It participates in cofactor biosynthesis; pyridoxine 5'-phosphate biosynthesis; pyridoxine 5'-phosphate from D-erythrose 4-phosphate: step 2/5. In terms of biological role, catalyzes the oxidation of erythronate-4-phosphate to 3-hydroxy-2-oxo-4-phosphonooxybutanoate. This is Erythronate-4-phosphate dehydrogenase from Shewanella oneidensis (strain ATCC 700550 / JCM 31522 / CIP 106686 / LMG 19005 / NCIMB 14063 / MR-1).